The chain runs to 822 residues: Structure-specific endonuclease subunit SLX4 (822 aa).

6 disordered regions span residues 1-39 (MSHLDLTRHRTRSPSPSQIFGSSTTPVATNSTHSEPSAS), 73-117 (TPAV…PRPL), 277-362 (GTTN…GVSD), 390-418 (RVSSDEDKLGVPSAPASSRQSARDRTSVS), 456-507 (KSHE…SGQL), and 589-676 (KNSA…QASS). The span at 13–39 (SPSPSQIFGSSTTPVATNSTHSEPSAS) shows a compositional bias: polar residues. Positions 280–294 (NSSSSEGSSNKSSGK) are enriched in low complexity. The span at 310 to 320 (VTTITSLSTAQ) shows a compositional bias: polar residues. Residues 342 to 354 (GKRSKSQTKKGGN) show a composition bias toward basic residues. Residues 460–470 (SSTLTLPSTST) are compositionally biased toward low complexity. Over residues 471–484 (NASNQGFSSQNTIN) the composition is skewed to polar residues. Residues 490–506 (SQTTSTTTESTGVESGQ) show a composition bias toward low complexity. Positions 589–612 (KNSAPTSLPANNANPPDSHASGQK) are enriched in polar residues. The span at 627–636 (TTKRASKAPQ) shows a compositional bias: basic residues. Residues 637–650 (KKQSTSSTSHSAKA) are compositionally biased toward low complexity.

Belongs to the SLX4 family. As to quaternary structure, forms a heterodimer with SLX1. Post-translationally, phosphorylated in response to DNA damage.

The protein localises to the nucleus. Functionally, regulatory subunit of the SLX1-SLX4 structure-specific endonuclease that resolves DNA secondary structures generated during DNA repair and recombination. Has endonuclease activity towards branched DNA substrates, introducing single-strand cuts in duplex DNA close to junctions with ss-DNA. The chain is Structure-specific endonuclease subunit SLX4 from Coccidioides immitis (strain RS) (Valley fever fungus).